Consider the following 145-residue polypeptide: Large ribosomal subunit protein uL11 (145 aa).

It belongs to the universal ribosomal protein uL11 family. As to quaternary structure, part of the ribosomal stalk of the 50S ribosomal subunit. Interacts with L10 and the large rRNA to form the base of the stalk. L10 forms an elongated spine to which L12 dimers bind in a sequential fashion forming a multimeric L10(L12)X complex. In terms of processing, one or more lysine residues are methylated.

Functionally, forms part of the ribosomal stalk which helps the ribosome interact with GTP-bound translation factors. This Rickettsia felis (strain ATCC VR-1525 / URRWXCal2) (Rickettsia azadi) protein is Large ribosomal subunit protein uL11.